Here is a 320-residue protein sequence, read N- to C-terminus: Apolipoprotein E (320 aa).

The signal sequence occupies residues 1–18; that stretch reads MKVLWAAFLVAFLAGCQG. Tandem repeats lie at residues 82–103, 104–125, 126–147, 148–169, 170–191, 192–213, 214–236, and 237–258. Residues 82-199 are 8 X 22 AA approximate tandem repeats; sequence ALMDETMKEL…AERGVSAIRE (118 aa). Residue Met145 is modified to Methionine sulfoxide. Ser149 is subject to Phosphoserine. An LDL and other lipoprotein receptors binding region spans residues 160–170; it reads HLRKLRKRLLR. Heparin is bound at residue 164 to 167; that stretch reads LRKR. Residues 212–293 form a lipid-binding and lipoprotein association region; sequence AATVGSSLAS…SWFEPLVEDM (82 aa). 232–239 is a heparin binding site; it reads GERLRARM. Residues 269–320 are homooligomerization; sequence QQMRLQAEAFQARLKSWFEPLVEDMQRQWAGLVEKVQAAVGASATPVPSDNH. The tract at residues 281 to 293 is specificity for association with VLDL; sequence RLKSWFEPLVEDM.

It belongs to the apolipoprotein A1/A4/E family. As to quaternary structure, homotetramer. May interact with ABCA1; functionally associated with ABCA1 in the biogenesis of HDLs. May interact with APP/A4 amyloid-beta peptide; the interaction is extremely stable in vitro but its physiological significance is unclear. May interact with MAPT. May interact with MAP2. In the cerebrospinal fluid, interacts with secreted SORL1. Interacts with PMEL; this allows the loading of PMEL luminal fragment on ILVs to induce fibril nucleation. Post-translationally, APOE exists as multiple glycosylated and sialylated glycoforms within cells and in plasma. The extent of glycosylation and sialylation are tissue and context specific. Glycated in plasma VLDL. In terms of processing, phosphorylated by FAM20C in the extracellular medium.

It is found in the secreted. It localises to the extracellular space. The protein localises to the extracellular matrix. Its subcellular location is the extracellular vesicle. The protein resides in the endosome. It is found in the multivesicular body. Its function is as follows. APOE is an apolipoprotein, a protein associating with lipid particles, that mainly functions in lipoprotein-mediated lipid transport between organs via the plasma and interstitial fluids. APOE is a core component of plasma lipoproteins and is involved in their production, conversion and clearance. Apolipoproteins are amphipathic molecules that interact both with lipids of the lipoprotein particle core and the aqueous environment of the plasma. As such, APOE associates with chylomicrons, chylomicron remnants, very low density lipoproteins (VLDL) and intermediate density lipoproteins (IDL) but shows a preferential binding to high-density lipoproteins (HDL). It also binds a wide range of cellular receptors including the LDL receptor/LDLR, the LDL receptor-related proteins LRP1, LRP2 and LRP8 and the very low-density lipoprotein receptor/VLDLR that mediate the cellular uptake of the APOE-containing lipoprotein particles. Finally, APOE also has a heparin-binding activity and binds heparan-sulfate proteoglycans on the surface of cells, a property that supports the capture and the receptor-mediated uptake of APOE-containing lipoproteins by cells. A main function of APOE is to mediate lipoprotein clearance through the uptake of chylomicrons, VLDLs, and HDLs by hepatocytes. APOE is also involved in the biosynthesis by the liver of VLDLs as well as their uptake by peripheral tissues ensuring the delivery of triglycerides and energy storage in muscle, heart and adipose tissues. By participating in the lipoprotein-mediated distribution of lipids among tissues, APOE plays a critical role in plasma and tissues lipid homeostasis. APOE is also involved in two steps of reverse cholesterol transport, the HDLs-mediated transport of cholesterol from peripheral tissues to the liver, and thereby plays an important role in cholesterol homeostasis. First, it is functionally associated with ABCA1 in the biogenesis of HDLs in tissues. Second, it is enriched in circulating HDLs and mediates their uptake by hepatocytes. APOE also plays an important role in lipid transport in the central nervous system, regulating neuron survival and sprouting. This is Apolipoprotein E (APOE) from Saimiri boliviensis boliviensis (Bolivian squirrel monkey).